We begin with the raw amino-acid sequence, 877 residues long: (E,E)-geranyllinalool synthase (877 aa).

Residues Asp540 and Asp544 each contribute to the Mg(2+) site. Residues Asp540, Asp544, Arg677, and Asn680 each coordinate substrate. Positions 540–544 match the DDXXD motif motif; it reads DDFFD. Mg(2+) contacts are provided by Asn680, Ser684, and Glu688.

Belongs to the terpene synthase family. Tpsf subfamily. Mg(2+) is required as a cofactor. The cofactor is Mn(2+). As to expression, expressed in leaves and flowers.

The protein resides in the cytoplasm. The enzyme catalyses (2E,6E,10E)-geranylgeranyl diphosphate + H2O = (6E,10E)-geranyllinalool + diphosphate. Its pathway is secondary metabolite biosynthesis; terpenoid biosynthesis. Its function is as follows. Involved in the biosynthesis of homoterpenes, attractants of herbivores parasitoids and predators (e.g. predatory mites and parasitoid wasps). Involved in diterpene (C20) biosynthesis. Catalyzes the conversion of geranylgeranyl diphosphate to (E,E)-geranyllinalool, the precursor of the insect-induced volatile C16-homoterpene TMTT. The protein is (E,E)-geranyllinalool synthase of Arabidopsis thaliana (Mouse-ear cress).